Consider the following 48-residue polypeptide: Light-harvesting polypeptide B-885 beta-1 chain (48 aa).

Over 1–20 the chain is Cytoplasmic; the sequence is AEDRKSLSGLTEQEAQEFGT. Residues 21–43 traverse the membrane as a helical segment; the sequence is LYTQGVAFVAVIAVVAHALVWAW. A bacteriochlorophyll is bound at residue His-37. Residues 44 to 48 are Periplasmic-facing; that stretch reads RPWLQ.

This sequence belongs to the antenna complex beta subunit family. In terms of assembly, the core complex is formed by different alpha and beta chains, binding bacteriochlorophyll molecules, and arranged most probably in tetrameric structures disposed around the reaction center. The non-pigmented gamma chains may constitute additional components.

It localises to the cell inner membrane. Functionally, antenna complexes are light-harvesting systems, which transfer the excitation energy to the reaction centers. This Rhodocyclus tenuis (Rhodospirillum tenue) protein is Light-harvesting polypeptide B-885 beta-1 chain.